Here is a 542-residue protein sequence, read N- to C-terminus: GPI alpha-1,2-mannosyltransferase 3 (542 aa).

The disordered stretch occupies residues 1 to 36; that stretch reads MESQAADYNPASRNLHGSSGEMKLRRRKSRQYVSAQ. 8 helical membrane passes run 52-72, 125-145, 213-233, 244-264, 304-324, 327-347, 351-371, and 376-396; these read LVLF…TSFV, VQFL…VADI, LVAL…PLLF, HLTL…SLII, GFPV…FLAP, LHIL…LGHK, FIYP…AHLK, and AALS…GLVH. A glycan (N-linked (GlcNAc...) asparagine) is linked at Asn480.

This sequence belongs to the glycosyltransferase 22 family. PIGB subfamily.

The protein localises to the endoplasmic reticulum membrane. The protein operates within glycolipid biosynthesis; glycosylphosphatidylinositol-anchor biosynthesis. Alpha-1,2-mannosyltransferase that catalyzes the transfer of the third mannose, via an alpha-1,2 bond, from a dolichol-phosphate-mannose (Dol-P-Man) to an alpha-D-Man-(1-&gt;6)-2-PEtn-alpha-D-Man-(1-&gt;4)-alpha-D-GlcN-(1-&gt;6)-(1-radyl,2-acyl-sn-glycero-3-phospho)-2-acyl-inositol intermediate to generate an alpha-D-Man-(1-&gt;2)-alpha-D-Man-(1-&gt;6)-2-PEtn-alpha-D-Man-(1-&gt;4)-alpha-D-GlcN-(1-&gt;6)-(1-radyl,2-acyl-sn-glycero-3-phospho)-2-acyl-inositol (also termed H6) and participates in the nineth step of the glycosylphosphatidylinositol-anchor biosynthesis. May also add the third mannose to an alpha-D-Man-(1-&gt;6)-alpha-D-Man-(1-&gt;4)-alpha-D-GlcN-(1-&gt;6)-(1-radyl,2-acyl-sn-glycero-3-phospho)-2-acyl-inositol (also termed H3) intermediate generating an alpha-D-Man-(1-&gt;2)-alpha-D-Man-(1-&gt;6)-alpha-D-Man-(1-&gt;4)-alpha-D-GlcN-(1-&gt;6)-(1-radyl,2-acyl-sn-glycero-3-phospho)-2-acyl-inositol (also termed H4). In Mus musculus (Mouse), this protein is GPI alpha-1,2-mannosyltransferase 3.